A 245-amino-acid chain; its full sequence is AP-1-like transcription factor YAP7 (245 aa).

Residues 1 to 144 are disordered; that stretch reads MRQRRSVVAV…NRDAQRAYRE (144 aa). Polar residues predominate over residues 74–94; that stretch reads SANNDGSSKIKKVQTSNQKDQ. 2 stretches are compositionally biased toward basic and acidic residues: residues 95–114 and 135–144; these read MTTK…KSDD and NRDAQRAYRE. The 64-residue stretch at 125–188 folds into the bZIP domain; the sequence is VDSVEKRRRQ…SDTKENLQKS (64 aa). A basic motif region spans residues 130 to 149; it reads KRRRQNRDAQRAYRERRTTR. The interval 153–181 is leucine-zipper; that stretch reads LEEKVEMLHNLVDDWQRKYKLLESEFSDT.

This sequence belongs to the bZIP family. YAP subfamily. Homodimer.

It is found in the nucleus. Functionally, probable transcription activator linked to cell cycle that induces transcription activation of genes in the environmental stress response and metabolism control pathways, like the closely related YAP5. In Saccharomyces cerevisiae (strain ATCC 204508 / S288c) (Baker's yeast), this protein is AP-1-like transcription factor YAP7 (YAP7).